The following is a 228-amino-acid chain: Cytochrome c oxidase subunit 2 (228 aa).

Residues 1-26 (MPNWGQVMFQDAASSVMLQLVSFHDH) are Mitochondrial intermembrane-facing. Residues 27–47 (ALLVLTLVLTVVGYALLALML) traverse the membrane as a helical segment. The Mitochondrial matrix portion of the chain corresponds to 48 to 60 (NKQVNRYIMEAQT). Residues 61-81 (VETIWTILPALILLVLALPSL) traverse the membrane as a helical segment. The Mitochondrial intermembrane segment spans residues 82-228 (RILYITDEVS…FMSWVSNFKP (147 aa)). Cu cation is bound by residues His161, Cys196, Glu198, Cys200, His204, and Met207. Glu198 contributes to the Mg(2+) binding site.

This sequence belongs to the cytochrome c oxidase subunit 2 family. Component of the cytochrome c oxidase (complex IV, CIV), a multisubunit enzyme composed of a catalytic core of 3 subunits and several supernumerary subunits. The complex exists as a monomer or a dimer and forms supercomplexes (SCs) in the inner mitochondrial membrane with ubiquinol-cytochrome c oxidoreductase (cytochrome b-c1 complex, complex III, CIII). It depends on Cu cation as a cofactor.

It is found in the mitochondrion inner membrane. The enzyme catalyses 4 Fe(II)-[cytochrome c] + O2 + 8 H(+)(in) = 4 Fe(III)-[cytochrome c] + 2 H2O + 4 H(+)(out). Its function is as follows. Component of the cytochrome c oxidase, the last enzyme in the mitochondrial electron transport chain which drives oxidative phosphorylation. The respiratory chain contains 3 multisubunit complexes succinate dehydrogenase (complex II, CII), ubiquinol-cytochrome c oxidoreductase (cytochrome b-c1 complex, complex III, CIII) and cytochrome c oxidase (complex IV, CIV), that cooperate to transfer electrons derived from NADH and succinate to molecular oxygen, creating an electrochemical gradient over the inner membrane that drives transmembrane transport and the ATP synthase. Cytochrome c oxidase is the component of the respiratory chain that catalyzes the reduction of oxygen to water. Electrons originating from reduced cytochrome c in the intermembrane space (IMS) are transferred via the dinuclear copper A center (CU(A)) of subunit 2 and heme A of subunit 1 to the active site in subunit 1, a binuclear center (BNC) formed by heme A3 and copper B (CU(B)). The BNC reduces molecular oxygen to 2 water molecules using 4 electrons from cytochrome c in the IMS and 4 protons from the mitochondrial matrix. The protein is Cytochrome c oxidase subunit 2 (COII) of Lumbricus terrestris (Common earthworm).